Here is a 178-residue protein sequence, read N- to C-terminus: Probable DNA-directed RNA polymerase subunit delta (178 aa).

Residues 14–81 (LSLIDVAHFI…GNNTWGLRAW (68 aa)) form the HTH HARE-type domain. 2 disordered regions span residues 89 to 122 (EEVQ…DYDD) and 141 to 178 (LDED…PEDK). Acidic residues-rich tracts occupy residues 105–122 (DDDD…DYDD), 141–150 (LDEDEDDDDH), and 161–178 (TVED…PEDK).

This sequence belongs to the RpoE family. In terms of assembly, RNAP is composed of a core of 2 alpha, a beta and a beta' subunits. The core is associated with a delta subunit and one of several sigma factors.

Participates in both the initiation and recycling phases of transcription. In the presence of the delta subunit, RNAP displays an increased specificity of transcription, a decreased affinity for nucleic acids, and an increased efficiency of RNA synthesis because of enhanced recycling. The protein is Probable DNA-directed RNA polymerase subunit delta of Listeria innocua serovar 6a (strain ATCC BAA-680 / CLIP 11262).